Here is a 127-residue protein sequence, read N- to C-terminus: Large ribosomal subunit protein eL8 (127 aa).

It belongs to the eukaryotic ribosomal protein eL8 family. In terms of assembly, part of the 50S ribosomal subunit. Probably part of the RNase P complex.

Its subcellular location is the cytoplasm. In terms of biological role, multifunctional RNA-binding protein that recognizes the K-turn motif in ribosomal RNA, the RNA component of RNase P, box H/ACA, box C/D and box C'/D' sRNAs. The protein is Large ribosomal subunit protein eL8 of Saccharolobus islandicus (strain Y.N.15.51 / Yellowstone #2) (Sulfolobus islandicus).